The following is a 78-amino-acid chain: Acyl carrier protein (78 aa).

Residues 2–77 (STIEERVKKI…AAIDYIEAAN (76 aa)) form the Carrier domain. At Ser-37 the chain carries O-(pantetheine 4'-phosphoryl)serine.

Belongs to the acyl carrier protein (ACP) family. In terms of processing, 4'-phosphopantetheine is transferred from CoA to a specific serine of apo-ACP by AcpS. This modification is essential for activity because fatty acids are bound in thioester linkage to the sulfhydryl of the prosthetic group.

It is found in the cytoplasm. The protein operates within lipid metabolism; fatty acid biosynthesis. Carrier of the growing fatty acid chain in fatty acid biosynthesis. This Edwardsiella ictaluri (strain 93-146) protein is Acyl carrier protein.